An 84-amino-acid polypeptide reads, in one-letter code: Defensin-like protein 140 (84 aa).

Positions 1 to 28 (MSKSLQLIVTVLCIFTILVLGEICLAKG) are cleaved as a signal peptide. Disulfide bonds link cysteine 37–cysteine 81, cysteine 46–cysteine 65, cysteine 51–cysteine 75, and cysteine 55–cysteine 77.

The protein belongs to the DEFL family.

It is found in the secreted. The sequence is that of Defensin-like protein 140 (LCR15) from Arabidopsis thaliana (Mouse-ear cress).